A 687-amino-acid chain; its full sequence is Mitochondrial 15S rRNA processing factor ppr3 (687 aa).

Residues M1–C49 constitute a mitochondrion transit peptide. PPR repeat units follow at residues N262 to P296, S297 to I331, S334 to P368, and T372 to P407.

This sequence belongs to the CCM1 family. As to quaternary structure, binds to mitochondrial small subunit 15S rRNA.

The protein localises to the mitochondrion. In terms of biological role, regulates mitochondrial small subunit maturation by controlling 15S rRNA 5'-end processing. Localizes to the 5' precursor of the 15S rRNA in a position that is subsequently occupied by mS47 in the mature yeast mtSSU. Uses structure and sequence-specific RNA recognition, binding to a single-stranded region of the precursor and specifically recognizing bases -6 to -1. The exchange of Ccm1 for mS47 is coupled to the irreversible removal of precursor rRNA that is accompanied by conformational changes of the mitoribosomal proteins uS5m and mS26. These conformational changes signal completion of 5'-end rRNA processing through protection of the mature 5'-end of the 15S rRNA and stabilization of mS47. The removal of the 5' precursor together with the dissociation of Ccm1 may be catalyzed by the 5'-3' exoribonuclease Pet127. Involved in the specific removal of group I introns in mitochondrial encoded transcripts. The polypeptide is Mitochondrial 15S rRNA processing factor ppr3 (Schizosaccharomyces pombe (strain 972 / ATCC 24843) (Fission yeast)).